Reading from the N-terminus, the 438-residue chain is Adenosylhomocysteinase (438 aa).

The substrate site is built by Thr-61, Asp-137, and Glu-162. Residue 163-165 (TTT) participates in NAD(+) binding. Residues Lys-192 and Asp-196 each contribute to the substrate site. NAD(+)-binding positions include Asn-197, 226-231 (GYGDVG), Glu-249, Asn-284, 305-307 (IGH), and Asn-352.

The protein belongs to the adenosylhomocysteinase family. NAD(+) serves as cofactor.

Its subcellular location is the cytoplasm. It carries out the reaction S-adenosyl-L-homocysteine + H2O = L-homocysteine + adenosine. It participates in amino-acid biosynthesis; L-homocysteine biosynthesis; L-homocysteine from S-adenosyl-L-homocysteine: step 1/1. May play a key role in the regulation of the intracellular concentration of adenosylhomocysteine. The polypeptide is Adenosylhomocysteinase (Flavobacterium johnsoniae (strain ATCC 17061 / DSM 2064 / JCM 8514 / BCRC 14874 / CCUG 350202 / NBRC 14942 / NCIMB 11054 / UW101) (Cytophaga johnsonae)).